The primary structure comprises 422 residues: Carboxypeptidase B2 (422 aa).

The signal sequence occupies residues Met-1 to Ala-21. A propeptide spans Phe-22 to Arg-113 (activation peptide). N-linked (GlcNAc...) asparagine glycans are attached at residues Asn-43, Asn-72, Asn-84, and Asn-107. Residues Gln-121–Val-418 enclose the Peptidase M14 domain. Cys-177 and Cys-190 are disulfide-bonded. Zn(2+)-binding residues include His-180 and Glu-183. Substrate contacts are provided by residues His-180–Glu-183 and Arg-238. N-linked (GlcNAc...) asparagine glycosylation is present at Asn-240. 2 cysteine pairs are disulfide-bonded: Cys-249/Cys-273 and Cys-264/Cys-278. Asn-255 to Arg-256 is a binding site for substrate. His-309 is a Zn(2+) binding site. Ser-310–Tyr-311 is a substrate binding site. An N-linked (GlcNAc...) asparagine glycan is attached at Asn-322. Residue Tyr-362 coordinates substrate. The active-site Proton donor/acceptor is Glu-384.

It belongs to the peptidase M14 family. Zn(2+) serves as cofactor. Plasma; synthesized in the liver.

The protein localises to the secreted. The enzyme catalyses Release of C-terminal Arg and Lys from a polypeptide.. Its activity is regulated as follows. TAFI/CPB2 is unique among carboxypeptidases in that it spontaneously inactivates with a short half-life, a property that is crucial for its role in controlling blood clot lysis. The zymogen is stabilized by interactions with the activation peptide. Release of the activation peptide increases a dynamic flap mobility and in time this leads to conformational changes that disrupt the catalytic site and expose a cryptic thrombin-cleavage site present at Arg-323. Its function is as follows. Cleaves C-terminal arginine or lysine residues from biologically active peptides such as kinins or anaphylatoxins in the circulation thereby regulating their activities. Down-regulates fibrinolysis by removing C-terminal lysine residues from fibrin that has already been partially degraded by plasmin. The polypeptide is Carboxypeptidase B2 (Cpb2) (Rattus norvegicus (Rat)).